The sequence spans 94 residues: Co-chaperonin GroES (94 aa).

This sequence belongs to the GroES chaperonin family. As to quaternary structure, heptamer of 7 subunits arranged in a ring. Interacts with the chaperonin GroEL.

It localises to the cytoplasm. Its function is as follows. Together with the chaperonin GroEL, plays an essential role in assisting protein folding. The GroEL-GroES system forms a nano-cage that allows encapsulation of the non-native substrate proteins and provides a physical environment optimized to promote and accelerate protein folding. GroES binds to the apical surface of the GroEL ring, thereby capping the opening of the GroEL channel. This chain is Co-chaperonin GroES, found in Lactiplantibacillus plantarum (strain ATCC BAA-793 / NCIMB 8826 / WCFS1) (Lactobacillus plantarum).